A 147-amino-acid polypeptide reads, in one-letter code: AP-2 complex subunit sigma (147 aa).

It belongs to the adaptor complexes small subunit family. In terms of assembly, adaptor protein complex 2 (AP-2) is a heterotetramer composed of two large adaptins (alpha-type subunit APL3 and beta-type subunit APL1), a medium chain (mu-type subunit APM4) and a small adaptin (sigma-type subunit APS2). Interacts with APL1.

The protein resides in the cell membrane. It is found in the membrane. It localises to the coated pit. In terms of biological role, component of the adaptor complexes which link clathrin to receptors in coated vesicles. Clathrin-associated protein complexes are believed to interact with the cytoplasmic tails of membrane proteins, leading to their selection and concentration. In Saccharomyces cerevisiae (strain ATCC 204508 / S288c) (Baker's yeast), this protein is AP-2 complex subunit sigma (APS2).